The primary structure comprises 440 residues: MSEFSQTVPELVAWARKNDFSISLQVDRLSFLLAVATLNGERLDGEMSEGELVDAFRHVSDAFEQTSETIGVRANNAINDMVRQRLLNRFTSEQAEGNAIYRLTPLGIGITDYYIRQREFSTLRLSMQLSIVAGELKRAADAAEEGGDEFHWHRNVYAPLKYSVAEIFDSIDLTQRLMDEQQQQVKDDIAQLLNKDWRAAISSCELLLSETSGTLRELQDTLEAAGDKLQANLLRIQDATMTHDDLHFVDRLVFDLQSKLDRIISWGQQSIDLWIGYDRHVHKFIRTAIDMDKNRVFAQRLRQSVQTYFDEPWALTYANADRLLDMRDEEMALRDEEVTGELPEDLEYEEFNEIREQLAAIIEEQLAVYKTRQVPLDLGLVVREYLSQYPRARHFDVARIVIDQAVRLGVAQADFTGLPAKWQPINDYGAKVQAHVIDKY.

A leucine-zipper region spans residues 208–236 (LSETSGTLRELQDTLEAAGDKLQANLLRI).

This sequence belongs to the MukF family. In terms of assembly, interacts, and probably forms a ternary complex, with MukE and MukB via its C-terminal region. The complex formation is stimulated by calcium or magnesium. It is required for an interaction between MukE and MukB.

It is found in the cytoplasm. The protein localises to the nucleoid. In terms of biological role, involved in chromosome condensation, segregation and cell cycle progression. May participate in facilitating chromosome segregation by condensation DNA from both sides of a centrally located replisome during cell division. Not required for mini-F plasmid partitioning. Probably acts via its interaction with MukB and MukE. Overexpression results in anucleate cells. It has a calcium binding activity. This chain is Chromosome partition protein MukF, found in Shigella boydii serotype 4 (strain Sb227).